Consider the following 640-residue polypeptide: MKYDFSTLSPDDFENLSRDLVGAETGVRFEAFTVGADDGMDGRHAKADGSIILQAKHYLRSGFSKLKSKMREERVSIDELAPQRYILTTSVPLTPANKATLTEIIGPSLVGPGDIFGADDLNGLLRSYPEIVKAHEGLWAHSTPVLEEVVTNAVRKAMAPAEVPKTLARLMPPPGAADAPIEPVKRDTIFIIKASPIDDEFTLWLAPKLEAEGYQVFADVLTLMPGERWRREITSALRHRAVKVLLLCRDSSLEDSSIQDDLDIALETGKELGDQRFVIPLRMETFRKIKGLGDTVAVDFVRNWGEGLLKLIDTLQRQKVQRSIDTMINPNWEIYRRRGAVPIIEVPERLTSNWLRVAEAPDFIRYFECSGSINKGRLQGAIDSYGHPCALVGGSGFLAFGGVPEIEMAFEAVGRFKLKHEIPLVEFTEGGFQRLRIDRQIASNLVVAMLKKAWFNYCKRNGFIEHGYSNGIGFHASPEQAPTGKRIPWGNQAEKKRSSMLRNSAKGHIWQFGVTAMPAFWPFWHFKLKSRVLFAQDNDTPAGLVVDDPKKLHRLRRSVCKGWRNKQWYGRLLAFLELLSGESAFVRLPLSETETFVIEASPMLFSSPVSTVLPNDLDDEDEELDDSTLGRPDSDEEGGE.

A TIR domain is found at 184–328 (VKRDTIFIIK…KVQRSIDTMI (145 aa)). The tract at residues 613 to 640 (LPNDLDDEDEELDDSTLGRPDSDEEGGE) is disordered. Residues 616-626 (DLDDEDEELDD) are compositionally biased toward acidic residues.

This is an uncharacterized protein from Sinorhizobium fredii (strain NBRC 101917 / NGR234).